A 540-amino-acid polypeptide reads, in one-letter code: Tyrosinase (540 aa).

Positions 1–19 (MKSLFLSAVLLQFFETCWS) are cleaved as a signal peptide. Residues 20–480 (QFPRPCANSE…LQQAQQIWQW (461 aa)) are Lumenal, melanosome-facing. A glycan (N-linked (GlcNAc...) asparagine) is linked at Asn87. Cu cation is bound by residues His182, His205, and His214. N-linked (GlcNAc...) asparagine glycosylation is found at Asn233, Asn293, and Asn340. Cu cation contacts are provided by His366 and His370. Asn374 is a glycosylation site (N-linked (GlcNAc...) asparagine). Cu cation is bound at residue His393. The helical transmembrane segment at 481-501 (LLGAGILGALIATIVAAVIVF) threads the bilayer. The Cytoplasmic segment spans residues 502–540 (ARRKRRRNQKRKRAPSFGERQPLLQSSSEEGSSSYQTTL). Residues 511–540 (KRKRAPSFGERQPLLQSSSEEGSSSYQTTL) form a disordered region. Residues 527–540 (SSSEEGSSSYQTTL) show a composition bias toward low complexity.

The protein belongs to the tyrosinase family. Requires Cu(2+) as cofactor.

The protein localises to the melanosome membrane. It catalyses the reaction 2 L-dopa + O2 = 2 L-dopaquinone + 2 H2O. It carries out the reaction L-tyrosine + O2 = L-dopaquinone + H2O. In terms of biological role, this is a copper-containing oxidase that functions in the formation of pigments such as melanins and other polyphenolic compounds. In Oryzias latipes (Japanese rice fish), this protein is Tyrosinase (tyr).